Consider the following 186-residue polypeptide: Large ribosomal subunit protein bL9 (186 aa).

Over residues 151–167 (PEEAEKQARGEAIMREE) the composition is skewed to basic and acidic residues. Residues 151–186 (PEEAEKQARGEAIMREESEYELETGEEVAEGPEQTA) are disordered. Acidic residues predominate over residues 168–180 (SEYELETGEEVAE).

The protein belongs to the bacterial ribosomal protein bL9 family.

Functionally, binds to the 23S rRNA. The protein is Large ribosomal subunit protein bL9 of Acidiphilium cryptum (strain JF-5).